The chain runs to 369 residues: 2-aminoethylphosphonate--pyruvate transaminase 1 (369 aa).

Position 191 is an N6-(pyridoxal phosphate)lysine (Lys191).

This sequence belongs to the class-V pyridoxal-phosphate-dependent aminotransferase family. PhnW subfamily. As to quaternary structure, homodimer. Requires pyridoxal 5'-phosphate as cofactor.

The catalysed reaction is (2-aminoethyl)phosphonate + pyruvate = phosphonoacetaldehyde + L-alanine. Involved in phosphonate degradation. The chain is 2-aminoethylphosphonate--pyruvate transaminase 1 from Burkholderia lata (strain ATCC 17760 / DSM 23089 / LMG 22485 / NCIMB 9086 / R18194 / 383).